Reading from the N-terminus, the 147-residue chain is Large ribosomal subunit protein uL16 (147 aa).

This sequence belongs to the universal ribosomal protein uL16 family. In terms of assembly, part of the 50S ribosomal subunit.

Binds 23S rRNA and is also seen to make contacts with the A and possibly P site tRNAs. The sequence is that of Large ribosomal subunit protein uL16 from Clostridium novyi (strain NT).